The chain runs to 157 residues: SsrA-binding protein (157 aa).

Belongs to the SmpB family.

The protein localises to the cytoplasm. In terms of biological role, required for rescue of stalled ribosomes mediated by trans-translation. Binds to transfer-messenger RNA (tmRNA), required for stable association of tmRNA with ribosomes. tmRNA and SmpB together mimic tRNA shape, replacing the anticodon stem-loop with SmpB. tmRNA is encoded by the ssrA gene; the 2 termini fold to resemble tRNA(Ala) and it encodes a 'tag peptide', a short internal open reading frame. During trans-translation Ala-aminoacylated tmRNA acts like a tRNA, entering the A-site of stalled ribosomes, displacing the stalled mRNA. The ribosome then switches to translate the ORF on the tmRNA; the nascent peptide is terminated with the 'tag peptide' encoded by the tmRNA and targeted for degradation. The ribosome is freed to recommence translation, which seems to be the essential function of trans-translation. The chain is SsrA-binding protein from Chlorobium chlorochromatii (strain CaD3).